The chain runs to 447 residues: Bifunctional protein GlmU (447 aa).

The interval 1–225 (MLTVAILAAG…NGELQGINNR (225 aa)) is pyrophosphorylase. UDP-N-acetyl-alpha-D-glucosamine contacts are provided by residues 7–10 (LAAG), Lys-21, Gln-73, and 78–79 (GT). Asp-103 provides a ligand contact to Mg(2+). Gly-140, Glu-154, Asn-169, and Asn-223 together coordinate UDP-N-acetyl-alpha-D-glucosamine. Asn-223 provides a ligand contact to Mg(2+). The tract at residues 226-246 (VQLSKCEETIQNLIKEKHMLG) is linker. The tract at residues 247-447 (GVTFINPASC…QVNIENWKKN (201 aa)) is N-acetyltransferase. UDP-N-acetyl-alpha-D-glucosamine is bound by residues Arg-328 and Lys-346. Catalysis depends on His-358, which acts as the Proton acceptor. Residues Tyr-361 and Asn-372 each contribute to the UDP-N-acetyl-alpha-D-glucosamine site. Positions 375, 418, and 435 each coordinate acetyl-CoA.

In the N-terminal section; belongs to the N-acetylglucosamine-1-phosphate uridyltransferase family. This sequence in the C-terminal section; belongs to the transferase hexapeptide repeat family. In terms of assembly, homotrimer. Requires Mg(2+) as cofactor.

The protein resides in the cytoplasm. The catalysed reaction is alpha-D-glucosamine 1-phosphate + acetyl-CoA = N-acetyl-alpha-D-glucosamine 1-phosphate + CoA + H(+). It carries out the reaction N-acetyl-alpha-D-glucosamine 1-phosphate + UTP + H(+) = UDP-N-acetyl-alpha-D-glucosamine + diphosphate. The protein operates within nucleotide-sugar biosynthesis; UDP-N-acetyl-alpha-D-glucosamine biosynthesis; N-acetyl-alpha-D-glucosamine 1-phosphate from alpha-D-glucosamine 6-phosphate (route II): step 2/2. It functions in the pathway nucleotide-sugar biosynthesis; UDP-N-acetyl-alpha-D-glucosamine biosynthesis; UDP-N-acetyl-alpha-D-glucosamine from N-acetyl-alpha-D-glucosamine 1-phosphate: step 1/1. Its pathway is bacterial outer membrane biogenesis; LPS lipid A biosynthesis. In terms of biological role, catalyzes the last two sequential reactions in the de novo biosynthetic pathway for UDP-N-acetylglucosamine (UDP-GlcNAc). The C-terminal domain catalyzes the transfer of acetyl group from acetyl coenzyme A to glucosamine-1-phosphate (GlcN-1-P) to produce N-acetylglucosamine-1-phosphate (GlcNAc-1-P), which is converted into UDP-GlcNAc by the transfer of uridine 5-monophosphate (from uridine 5-triphosphate), a reaction catalyzed by the N-terminal domain. This is Bifunctional protein GlmU from Prochlorococcus marinus (strain MIT 9515).